The sequence spans 258 residues: Acetylglutamate kinase (258 aa).

Residues glycine 44–glycine 45, arginine 66, and asparagine 158 contribute to the substrate site. ATP-binding positions include aspartate 181–leucine 186 and isoleucine 209–threonine 211.

This sequence belongs to the acetylglutamate kinase family. ArgB subfamily. In terms of assembly, homodimer.

It localises to the cytoplasm. It carries out the reaction N-acetyl-L-glutamate + ATP = N-acetyl-L-glutamyl 5-phosphate + ADP. It participates in amino-acid biosynthesis; L-arginine biosynthesis; N(2)-acetyl-L-ornithine from L-glutamate: step 2/4. Catalyzes the ATP-dependent phosphorylation of N-acetyl-L-glutamate. This chain is Acetylglutamate kinase, found in Shigella flexneri serotype 5b (strain 8401).